The sequence spans 336 residues: Carbamoyl dehydratase HypE (336 aa).

The residue at position 336 (Cys336) is an S-carbamoylcysteine; by HypF; alternate. Position 336 is an S-cyanocysteine; by autocatalysis; alternate (Cys336).

The protein belongs to the HypE family. As to quaternary structure, homodimer. Forms a complex with HypF. Also forms a complex with HypC, or HybG, and HypD. In terms of processing, modified by HypF, which adds a carboxamido group to the thiolate of the C-terminal cysteine, yielding a protein-S-carboxamide. The carboxamido group is then dehydrated by HypE itself to yield a protein-thiocyanate.

The catalysed reaction is C-terminal S-carboxamide-L-cysteinyl-[HypE protein] + ATP = C-terminal S-cyanate-L-cysteinyl-[HypE protein] + ADP + phosphate + H(+). The protein operates within protein modification; [NiFe] hydrogenase maturation. Its function is as follows. Involved in the maturation of [NiFe] hydrogenases. Along with HypF, it catalyzes the synthesis of the CN ligands of the active site iron of [NiFe]-hydrogenases. HypE catalyzes the ATP-dependent dehydration of the carboxamido group attached to its C-terminal cysteine to a cyano group. The cyano group is then transferred from HypE to the HypC-HypD complex or the HybG-HypD complex. This Escherichia coli (strain K12) protein is Carbamoyl dehydratase HypE.